Consider the following 565-residue polypeptide: Sulfite reductase [NADPH] hemoprotein beta-component (565 aa).

[4Fe-4S] cluster contacts are provided by Cys429, Cys435, Cys474, and Cys478. Cys478 contacts siroheme.

Belongs to the nitrite and sulfite reductase 4Fe-4S domain family. Alpha(8)-beta(8). The alpha component is a flavoprotein, the beta component is a hemoprotein. The cofactor is siroheme. Requires [4Fe-4S] cluster as cofactor.

It catalyses the reaction hydrogen sulfide + 3 NADP(+) + 3 H2O = sulfite + 3 NADPH + 4 H(+). It participates in sulfur metabolism; hydrogen sulfide biosynthesis; hydrogen sulfide from sulfite (NADPH route): step 1/1. Functionally, component of the sulfite reductase complex that catalyzes the 6-electron reduction of sulfite to sulfide. This is one of several activities required for the biosynthesis of L-cysteine from sulfate. This chain is Sulfite reductase [NADPH] hemoprotein beta-component, found in Shewanella baltica (strain OS223).